Consider the following 69-residue polypeptide: Conotoxin Eb6.14 (69 aa).

The first 17 residues, 1 to 17 (VLIIAVLFLTACQLTTA), serve as a signal peptide directing secretion. The propeptide occupies 18–41 (ETYSRGRQKHRARRSTDKNSKWTR). 3 disulfide bridges follow: C43-C57, C50-C61, and C56-C68.

This sequence belongs to the conotoxin O1 superfamily. As to expression, expressed by the venom duct.

Its subcellular location is the secreted. The chain is Conotoxin Eb6.14 (E1) from Conus ebraeus (Hebrew cone).